Here is a 70-residue protein sequence, read N- to C-terminus: Disintegrin triflavin (70 aa).

The Disintegrin domain maps to 1–70 (GEECDCGSPS…SADCPRWNGL (70 aa)). 6 disulfides stabilise this stretch: Cys4–Cys19, Cys6–Cys14, Cys13–Cys36, Cys27–Cys33, Cys32–Cys57, and Cys45–Cys64. Residues 49 to 51 (RGD) carry the Cell attachment site motif.

Belongs to the venom metalloproteinase (M12B) family. P-II subfamily. P-IIa sub-subfamily. As to quaternary structure, monomer. As to expression, expressed by the venom gland.

Its subcellular location is the secreted. Inhibits fibrinogen interaction with platelets. Acts by binding to alpha-IIb/beta-3 (ITGA2B/ITGB3) on the platelet surface and inhibits aggregation induced by ADP, thrombin, platelet-activating factor and collagen. This chain is Disintegrin triflavin, found in Protobothrops flavoviridis (Habu).